Reading from the N-terminus, the 772-residue chain is Heat shock protein 88 (772 aa).

Disordered regions lie at residues 496–519 (TAAPAETPAETPANGEAAKPAEEK) and 729–772 (LGKP…DILD). A compositionally biased stretch (low complexity) spans 497–513 (AAPAETPAETPANGEAA). Basic and acidic residues predominate over residues 735–772 (KPVEVPKEEPKDTPMESKDAPAEEPVATKDQKMDDILD).

It belongs to the heat shock protein 70 family.

In terms of biological role, may function in protein folding and assembly, and disassembly of protein complexes. This is Heat shock protein 88 (hspH) from Dictyostelium discoideum (Social amoeba).